The chain runs to 490 residues: Dual specificity protein kinase CLK3 (490 aa).

A disordered region spans residues 1 to 138; the sequence is MHHCKRYRSP…SKRSSRSVED (138 aa). A Phosphotyrosine modification is found at Tyr-7. Phosphoserine occurs at positions 9, 49, 51, 67, 76, and 78. Basic and acidic residues-rich tracts occupy residues 26–56 and 63–76; these read YSREHEGRLRYPSRREPPPRRSRSRSHDRIP and EHRDSDTYRCEERS. Residues 88–116 are compositionally biased toward basic residues; it reads RSRHRRRSRERGPYRTRKHAHHCHKRRTR. A compositionally biased stretch (low complexity) spans 117-130; it reads SCSSASSRSQQSSK. The residue at position 135 (Ser-135) is a Phosphoserine. The region spanning 156–472 is the Protein kinase domain; the sequence is YEIVGNLGEG…LAEALLHPFF (317 aa). ATP is bound by residues 162–170 and Lys-186; that span reads LGEGTFGKV. Residue Asp-283 is the Proton acceptor of the active site.

The protein belongs to the protein kinase superfamily. CMGC Ser/Thr protein kinase family. Lammer subfamily. Autophosphorylates on all three types of residues.

The protein localises to the nucleus. It localises to the cytoplasm. The protein resides in the cytoplasmic vesicle. Its subcellular location is the secretory vesicle. It is found in the acrosome. It carries out the reaction L-seryl-[protein] + ATP = O-phospho-L-seryl-[protein] + ADP + H(+). The catalysed reaction is L-threonyl-[protein] + ATP = O-phospho-L-threonyl-[protein] + ADP + H(+). It catalyses the reaction L-tyrosyl-[protein] + ATP = O-phospho-L-tyrosyl-[protein] + ADP + H(+). Leucettine L41 inhibits its kinase activity and affects the regulation of alternative splicing mediated by phosphorylation of SR proteins. Functionally, dual specificity kinase acting on both serine/threonine and tyrosine-containing substrates. Phosphorylates serine- and arginine-rich (SR) proteins of the spliceosomal complex. May be a constituent of a network of regulatory mechanisms that enable SR proteins to control RNA splicing and can cause redistribution of SR proteins from speckles to a diffuse nucleoplasmic distribution. Phosphorylates SRSF1 and SRSF3. Regulates the alternative splicing of tissue factor (F3) pre-mRNA in endothelial cells. This Rattus norvegicus (Rat) protein is Dual specificity protein kinase CLK3 (Clk3).